Reading from the N-terminus, the 118-residue chain is Small ribosomal subunit protein uS13 (118 aa).

A disordered region spans residues 94–118 (SLPLRGQRTKTNARTRKGPRKPIRK).

It belongs to the universal ribosomal protein uS13 family. In terms of assembly, part of the 30S ribosomal subunit. Forms a loose heterodimer with protein S19. Forms two bridges to the 50S subunit in the 70S ribosome.

In terms of biological role, located at the top of the head of the 30S subunit, it contacts several helices of the 16S rRNA. In the 70S ribosome it contacts the 23S rRNA (bridge B1a) and protein L5 of the 50S subunit (bridge B1b), connecting the 2 subunits; these bridges are implicated in subunit movement. Contacts the tRNAs in the A and P-sites. The chain is Small ribosomal subunit protein uS13 from Shewanella baltica (strain OS223).